Reading from the N-terminus, the 449-residue chain is Phosphoglucosamine mutase (449 aa).

Ser-100 (phosphoserine intermediate) is an active-site residue. Mg(2+) contacts are provided by Ser-100, Asp-241, Asp-243, and Asp-245. Ser-100 carries the phosphoserine modification.

The protein belongs to the phosphohexose mutase family. Requires Mg(2+) as cofactor. Post-translationally, activated by phosphorylation.

The enzyme catalyses alpha-D-glucosamine 1-phosphate = D-glucosamine 6-phosphate. Its function is as follows. Catalyzes the conversion of glucosamine-6-phosphate to glucosamine-1-phosphate. The polypeptide is Phosphoglucosamine mutase (Clostridium botulinum (strain Loch Maree / Type A3)).